We begin with the raw amino-acid sequence, 90 residues long: Small ribosomal subunit protein uS15 (90 aa).

The protein belongs to the universal ribosomal protein uS15 family. As to quaternary structure, part of the 30S ribosomal subunit. Forms a bridge to the 50S subunit in the 70S ribosome, contacting the 23S rRNA.

One of the primary rRNA binding proteins, it binds directly to 16S rRNA where it helps nucleate assembly of the platform of the 30S subunit by binding and bridging several RNA helices of the 16S rRNA. In terms of biological role, forms an intersubunit bridge (bridge B4) with the 23S rRNA of the 50S subunit in the ribosome. In Thermotoga maritima (strain ATCC 43589 / DSM 3109 / JCM 10099 / NBRC 100826 / MSB8), this protein is Small ribosomal subunit protein uS15.